Reading from the N-terminus, the 466-residue chain is Ribulose bisphosphate carboxylase large chain (466 aa).

An N6,N6,N6-trimethyllysine modification is found at Lys5. The substrate site is built by Asn114 and Thr164. Lys166 functions as the Proton acceptor in the catalytic mechanism. Lys168 serves as a coordination point for substrate. Mg(2+)-binding residues include Lys192, Asp194, and Glu195. Lys192 is subject to N6-carboxylysine. His285 functions as the Proton acceptor in the catalytic mechanism. Substrate-binding residues include Arg286, His318, and Ser370.

The protein belongs to the RuBisCO large chain family. Type I subfamily. In terms of assembly, heterohexadecamer of 8 large chains and 8 small chains; disulfide-linked. The disulfide link is formed within the large subunit homodimers. The cofactor is Mg(2+). Post-translationally, the disulfide bond which can form in the large chain dimeric partners within the hexadecamer appears to be associated with oxidative stress and protein turnover.

It localises to the plastid. The protein localises to the chloroplast. The catalysed reaction is 2 (2R)-3-phosphoglycerate + 2 H(+) = D-ribulose 1,5-bisphosphate + CO2 + H2O. It catalyses the reaction D-ribulose 1,5-bisphosphate + O2 = 2-phosphoglycolate + (2R)-3-phosphoglycerate + 2 H(+). In terms of biological role, ruBisCO catalyzes two reactions: the carboxylation of D-ribulose 1,5-bisphosphate, the primary event in carbon dioxide fixation, as well as the oxidative fragmentation of the pentose substrate in the photorespiration process. Both reactions occur simultaneously and in competition at the same active site. This Averrhoa carambola (Star fruit) protein is Ribulose bisphosphate carboxylase large chain.